Consider the following 652-residue polypeptide: Carboxypeptidase S1 homolog A (652 aa).

An N-terminal signal peptide occupies residues 1-19 (MRLAASIAVALPVIGAASA). Cys50 and Cys121 are disulfide-bonded. 6 N-linked (GlcNAc...) asparagine glycosylation sites follow: Asn77, Asn132, Asn161, Asn168, Asn184, and Asn202. Ser238 is an active-site residue. N-linked (GlcNAc...) asparagine glycans are attached at residues Asn260, Asn299, Asn347, and Asn410. Disulfide bonds link Cys325–Cys361 and Cys332–Cys354. Asp458 is an active-site residue. Cys461 is a substrate binding site. Asn474, Asn492, and Asn505 each carry an N-linked (GlcNAc...) asparagine glycan. Residue His516 is part of the active site. Glu517 contacts substrate. An N-linked (GlcNAc...) asparagine glycan is attached at Asn594. The disordered stretch occupies residues 608–628 (AASKGNPPPTTTSSPTASPTA). Residues 618–628 (TTSSPTASPTA) are compositionally biased toward low complexity. The GPI-anchor amidated glycine moiety is linked to residue Gly629. A propeptide spans 630 to 652 (SAMLKAPVAMLAISALTVLAFYL) (removed in mature form).

It belongs to the peptidase S10 family.

The protein localises to the cell membrane. The catalysed reaction is Preferential release of a C-terminal arginine or lysine residue.. Extracellular serine carboxypeptidase that contributes to pathogenicity. The sequence is that of Carboxypeptidase S1 homolog A (SCPA) from Trichophyton verrucosum (strain HKI 0517).